The chain runs to 96 residues: UPF0235 protein Pfl01_5322 (96 aa).

This sequence belongs to the UPF0235 family.

This chain is UPF0235 protein Pfl01_5322, found in Pseudomonas fluorescens (strain Pf0-1).